Consider the following 388-residue polypeptide: MEVISTNTNGSTIFKNGAIPMNGYQNGTSKHQNGHQNGTSEHRNGHQNGISEHQNGHKNGTSEHQNGHQNGTSEQQNGTISHDNGNELQLLGSSNSIKPGWFSEFSALWPGEAFSLKVEKLLFQGKSDYQDVMLFESATYGKVLTLDGAIQHTENGGFPYTEMIVHLPLGSIPNPKKVLIIGGGIGFTLFEMLRYPSIEKIDIVEIDDVVVDVSRKFFPYLAANFNDPRVTLVLGDGAAFVKAAQAGYYDAIIVDSSDPIGPAKDLFERPFFEAVAKALRPGGVVCTQAESIWLHMHIIKQIIANCRQVFKGSVNYAWTTVPTYPTGVIGYMLCSTEGPEVDFKNPINPIDKETTQVKSKLAPLKFYNFDIHKAAFILPSFARSMIES.

Composition is skewed to polar residues over residues 1–14, 23–39, and 46–88; these read MEVISTNTNGSTIF, GYQNGTSKHQNGHQNGT, and HQNG…GNEL. Residues 1–88 form a disordered region; that stretch reads MEVISTNTNG…TISHDNGNEL (88 aa). The 238-residue stretch at 99 to 336 folds into the PABS domain; it reads PGWFSEFSAL…GVIGYMLCST (238 aa). S-adenosyl-L-methionine-binding positions include glutamine 130, glutamate 205, and 236 to 237; that span reads DG. Aspartate 255 serves as the catalytic Proton acceptor. Position 324 (tyrosine 324) interacts with S-adenosyl-L-methionine.

The protein belongs to the class I-like SAM-binding methyltransferase superfamily. Spermidine/spermine synthase family. Mainly expressed in roots.

It catalyses the reaction putrescine + S-adenosyl-L-methionine = N-methylputrescine + S-adenosyl-L-homocysteine + H(+). Its pathway is alkaloid biosynthesis; nicotine biosynthesis. In terms of biological role, involved in the biosynthesis of pyridine alkaloid natural products, leading mainly to the production of anabasine, anatabine, nicotine and nornicotine, effective deterrents against herbivores with antiparasitic and pesticide properties (neurotoxins); nornicotine serves as the precursor in the synthesis of the carcinogen compound N'-nitrosonornicotine (NNN). Methyltransferase that mediates the conversion of putrescine to N-methylputrescine. The protein is Putrescine N-methyltransferase 1 of Nicotiana attenuata (Coyote tobacco).